The primary structure comprises 173 residues: Gonadotropin inhibitory hormone peptides (173 aa).

Residues 1–26 form the signal peptide; sequence MEIISTQKFILLTLATVAFLTPHGAC. The propeptide occupies 27-82; sequence LDELMKSSLESREDDDDKYYETKDSILEEKQRSLNFEEMKDWGSKNFMKVNTPTVN. Phenylalanine 95 is modified (phenylalanine amide). Positions 98–103 are excised as a propeptide; sequence SNPEER. A Phenylalanine amide modification is found at phenylalanine 115. A propeptide spanning residues 118–140 is cleaved from the precursor; the sequence is AFGESLSRRAPNLSNRSGRSPLA. The residue at position 154 (phenylalanine 154) is a Phenylalanine amide. A propeptide spanning residues 157 to 173 is cleaved from the precursor; that stretch reads SVPISLSQGVQESEPGM.

Belongs to the FARP (FMRFamide related peptide) family. In terms of tissue distribution, specifically expressed in the diencephalon.

The protein resides in the secreted. Hypothalamic factor, responsible for the negative regulation of gonadotropin secretion. In Coturnix japonica (Japanese quail), this protein is Gonadotropin inhibitory hormone peptides (GNIH).